The following is a 940-amino-acid chain: Isoleucine--tRNA ligase (940 aa).

The 'HIGH' region signature appears at 58–68 (PYANGNIHIGH). E563 is a binding site for L-isoleucyl-5'-AMP. Positions 604–608 (KMSKS) match the 'KMSKS' region motif. Residue K607 coordinates ATP. Zn(2+) is bound by residues C903, C906, C923, and C926.

The protein belongs to the class-I aminoacyl-tRNA synthetase family. IleS type 1 subfamily. As to quaternary structure, monomer. It depends on Zn(2+) as a cofactor.

It is found in the cytoplasm. The catalysed reaction is tRNA(Ile) + L-isoleucine + ATP = L-isoleucyl-tRNA(Ile) + AMP + diphosphate. Functionally, catalyzes the attachment of isoleucine to tRNA(Ile). As IleRS can inadvertently accommodate and process structurally similar amino acids such as valine, to avoid such errors it has two additional distinct tRNA(Ile)-dependent editing activities. One activity is designated as 'pretransfer' editing and involves the hydrolysis of activated Val-AMP. The other activity is designated 'posttransfer' editing and involves deacylation of mischarged Val-tRNA(Ile). This chain is Isoleucine--tRNA ligase, found in Buchnera aphidicola subsp. Acyrthosiphon pisum (strain 5A).